Consider the following 308-residue polypeptide: Acetylglutamate kinase (308 aa).

Substrate is bound by residues glycine 86–glycine 87, arginine 108, and asparagine 201.

Belongs to the acetylglutamate kinase family. ArgB subfamily.

The protein localises to the cytoplasm. It catalyses the reaction N-acetyl-L-glutamate + ATP = N-acetyl-L-glutamyl 5-phosphate + ADP. Its pathway is amino-acid biosynthesis; L-arginine biosynthesis; N(2)-acetyl-L-ornithine from L-glutamate: step 2/4. Its function is as follows. Catalyzes the ATP-dependent phosphorylation of N-acetyl-L-glutamate. This is Acetylglutamate kinase from Prochlorococcus marinus (strain MIT 9313).